Here is a 175-residue protein sequence, read N- to C-terminus: NADH-ubiquinone oxidoreductase chain 6 (175 aa).

5 helical membrane passes run 1–21, 25–45, 47–67, 88–108, and 149–169; these read MMTY…VGFS, SPIY…GIVL, FGGS…MMVV, VVLG…YYVL, and YGTW…VVIM.

Belongs to the complex I subunit 6 family. Core subunit of respiratory chain NADH dehydrogenase (Complex I) which is composed of 45 different subunits.

The protein localises to the mitochondrion inner membrane. The catalysed reaction is a ubiquinone + NADH + 5 H(+)(in) = a ubiquinol + NAD(+) + 4 H(+)(out). Its function is as follows. Core subunit of the mitochondrial membrane respiratory chain NADH dehydrogenase (Complex I) which catalyzes electron transfer from NADH through the respiratory chain, using ubiquinone as an electron acceptor. Essential for the catalytic activity and assembly of complex I. In Ovis aries (Sheep), this protein is NADH-ubiquinone oxidoreductase chain 6 (MT-ND6).